The primary structure comprises 207 residues: MSHGPLRVGIGGPVGAGKTTLTEKLCAALAHRCSMAVITNDIYTREDAEALMRAQVLPAERIRGVETGGCPHTAIREDASINLAAVADLRRTFPDLDLILIESGGDNLAATFSPELADLTIYVIDTAAGQDIPRKRGPGLARSDLLVVNKIDLAPHVGVDLARLEADTQAARGQRPYVMARMRAGVGVEAIVAFLEREGGLQLLPQD.

GTP is bound at residue 12–19 (GPVGAGKT).

This sequence belongs to the SIMIBI class G3E GTPase family. UreG subfamily. Homodimer. UreD, UreF and UreG form a complex that acts as a GTP-hydrolysis-dependent molecular chaperone, activating the urease apoprotein by helping to assemble the nickel containing metallocenter of UreC. The UreE protein probably delivers the nickel.

It is found in the cytoplasm. Functionally, facilitates the functional incorporation of the urease nickel metallocenter. This process requires GTP hydrolysis, probably effectuated by UreG. The sequence is that of Urease accessory protein UreG from Cereibacter sphaeroides (strain ATCC 17023 / DSM 158 / JCM 6121 / CCUG 31486 / LMG 2827 / NBRC 12203 / NCIMB 8253 / ATH 2.4.1.) (Rhodobacter sphaeroides).